The chain runs to 487 residues: Selenium-binding protein 2 (487 aa).

Position 2 is an N-acetylalanine (Ala2). 2 residues coordinate selenite: Cys19 and Cys20.

The protein belongs to the selenium-binding protein family. As to expression, mostly expressed in seedlings, leaves and stems, and, to a lower extent, in flowers and roots.

Its function is as follows. Required for the fusion of female gametophyte polar nuclei. This is Selenium-binding protein 2 (SBP2) from Arabidopsis thaliana (Mouse-ear cress).